Consider the following 183-residue polypeptide: Inner membrane-spanning protein YciB (183 aa).

5 helical membrane passes run L10–I30, M50–D70, A72–S92, V118–F138, and F148–L168.

The protein belongs to the YciB family.

The protein localises to the cell inner membrane. Functionally, plays a role in cell envelope biogenesis, maintenance of cell envelope integrity and membrane homeostasis. The chain is Inner membrane-spanning protein YciB from Shewanella sediminis (strain HAW-EB3).